The sequence spans 398 residues: Glycerol-3-phosphate dehydrogenase [NAD(+)] 1 (398 aa).

Residues 50–55 (GSGNWG), F138, K161, and A194 each bind NAD(+). K161 contributes to the substrate binding site. The active-site Proton acceptor is the K253. NAD(+) contacts are provided by R318 and Q350. 318–319 (RN) is a substrate binding site.

The protein belongs to the NAD-dependent glycerol-3-phosphate dehydrogenase family.

It localises to the cytoplasm. It catalyses the reaction sn-glycerol 3-phosphate + NAD(+) = dihydroxyacetone phosphate + NADH + H(+). This is Glycerol-3-phosphate dehydrogenase [NAD(+)] 1 (GPD1) from Yarrowia lipolytica (strain CLIB 122 / E 150) (Yeast).